A 222-amino-acid polypeptide reads, in one-letter code: Phosphoribosylformylglycinamidine synthase subunit PurQ (222 aa).

In terms of domain architecture, Glutamine amidotransferase type-1 spans 3 to 222 (AAVLVFPGSN…ASLAAALVAA (220 aa)). The Nucleophile role is filled by Cys-86. Residues His-194 and Glu-196 contribute to the active site.

As to quaternary structure, part of the FGAM synthase complex composed of 1 PurL, 1 PurQ and 2 PurS subunits.

It localises to the cytoplasm. It catalyses the reaction N(2)-formyl-N(1)-(5-phospho-beta-D-ribosyl)glycinamide + L-glutamine + ATP + H2O = 2-formamido-N(1)-(5-O-phospho-beta-D-ribosyl)acetamidine + L-glutamate + ADP + phosphate + H(+). The catalysed reaction is L-glutamine + H2O = L-glutamate + NH4(+). The protein operates within purine metabolism; IMP biosynthesis via de novo pathway; 5-amino-1-(5-phospho-D-ribosyl)imidazole from N(2)-formyl-N(1)-(5-phospho-D-ribosyl)glycinamide: step 1/2. In terms of biological role, part of the phosphoribosylformylglycinamidine synthase complex involved in the purines biosynthetic pathway. Catalyzes the ATP-dependent conversion of formylglycinamide ribonucleotide (FGAR) and glutamine to yield formylglycinamidine ribonucleotide (FGAM) and glutamate. The FGAM synthase complex is composed of three subunits. PurQ produces an ammonia molecule by converting glutamine to glutamate. PurL transfers the ammonia molecule to FGAR to form FGAM in an ATP-dependent manner. PurS interacts with PurQ and PurL and is thought to assist in the transfer of the ammonia molecule from PurQ to PurL. The chain is Phosphoribosylformylglycinamidine synthase subunit PurQ from Jannaschia sp. (strain CCS1).